We begin with the raw amino-acid sequence, 206 residues long: Large ribosomal subunit protein uL22m (206 aa).

The transit peptide at 1–40 (MAAAVLGQLGALWIHNLRSRGKLALGVLPQSYIHTSASLD) directs the protein to the mitochondrion.

This sequence belongs to the universal ribosomal protein uL22 family. In terms of assembly, component of the mitochondrial large ribosomal subunit (mt-LSU). Mature mammalian 55S mitochondrial ribosomes consist of a small (28S) and a large (39S) subunit. The 28S small subunit contains a 12S ribosomal RNA (12S mt-rRNA) and 30 different proteins. The 39S large subunit contains a 16S rRNA (16S mt-rRNA), a copy of mitochondrial valine transfer RNA (mt-tRNA(Val)), which plays an integral structural role, and 52 different proteins.

The protein resides in the mitochondrion. This chain is Large ribosomal subunit protein uL22m (MRPL22), found in Homo sapiens (Human).